Consider the following 322-residue polypeptide: L-asparaginase (322 aa).

One can recognise an Asparaginase/glutaminase domain in the interval 3–322; sequence KKVALITTGG…KEGIKDKFCY (320 aa). The active-site O-isoaspartyl threonine intermediate is Thr-13. Substrate contacts are provided by residues Ser-56 and 89-90; that span reads TD.

This sequence belongs to the asparaginase 1 family. In terms of assembly, homotetramer.

It localises to the cytoplasm. The catalysed reaction is L-asparagine + H2O = L-aspartate + NH4(+). This is L-asparaginase (ansA) from Bacillus licheniformis.